Consider the following 360-residue polypeptide: Methylthioribose-1-phosphate isomerase (360 aa).

Catalysis depends on Asp-246, which acts as the Proton donor.

The protein belongs to the eIF-2B alpha/beta/delta subunits family. MtnA subfamily.

It is found in the cytoplasm. It localises to the nucleus. The catalysed reaction is 5-(methylsulfanyl)-alpha-D-ribose 1-phosphate = 5-(methylsulfanyl)-D-ribulose 1-phosphate. Its pathway is amino-acid biosynthesis; L-methionine biosynthesis via salvage pathway; L-methionine from S-methyl-5-thio-alpha-D-ribose 1-phosphate: step 1/6. Functionally, catalyzes the interconversion of methylthioribose-1-phosphate (MTR-1-P) into methylthioribulose-1-phosphate (MTRu-1-P). The protein is Methylthioribose-1-phosphate isomerase of Aedes aegypti (Yellowfever mosquito).